A 270-amino-acid polypeptide reads, in one-letter code: Cbp/p300-interacting transactivator 2 (270 aa).

The tract at residues L138–M201 is disordered. Gly residues predominate over residues S165 to S198.

The protein belongs to the CITED family. In terms of assembly, interacts (via C-terminus) with SMAD2. Interacts (via C-terminus) with SMAD3 (via MH2 domain). Interacts with LHX2 (via LIM domains). Interacts with WT1. Interacts (via C-terminus) with EP300 (via CH1 domain); the interaction is stimulated in response to hypoxia. Interacts with PPARA. Interacts (via C-terminus) with TFAP2A, TFAP2B and TFAP2C.

Its subcellular location is the nucleus. Functionally, transcriptional coactivator of the p300/CBP-mediated transcription complex. Acts as a bridge, linking TFAP2 transcription factors and the p300/CBP transcriptional coactivator complex in order to stimulate TFAP2-mediated transcriptional activation. Positively regulates TGF-beta signaling through its association with the SMAD/p300/CBP-mediated transcriptional coactivator complex. Stimulates the peroxisome proliferator-activated receptors PPARA transcriptional activity. Enhances estrogen-dependent transactivation mediated by estrogen receptors. Also acts as a transcriptional corepressor; interferes with the binding of the transcription factors HIF1A or STAT2 and the p300/CBP transcriptional coactivator complex. Participates in sex determination and early gonad development by stimulating transcription activation of SRY. Plays a role in controlling left-right patterning during embryogenesis; potentiates transcriptional activation of NODAL-mediated gene transcription in the left lateral plate mesoderm (LPM). Plays an essential role in differentiation of the adrenal cortex from the adrenogonadal primordium (AGP); stimulates WT1-mediated transcription activation thereby up-regulating the nuclear hormone receptor NR5A1 promoter activity. Associates with chromatin to the PITX2 P1 promoter region. In Homo sapiens (Human), this protein is Cbp/p300-interacting transactivator 2 (CITED2).